The chain runs to 231 residues: Small ribosomal subunit protein uS3 (231 aa).

A KH type-2 domain is found at 39–107; it reads IRKFIMKTLP…GVSLNIVEIR (69 aa).

This sequence belongs to the universal ribosomal protein uS3 family. Part of the 30S ribosomal subunit. Forms a tight complex with proteins S10 and S14.

Functionally, binds the lower part of the 30S subunit head. Binds mRNA in the 70S ribosome, positioning it for translation. In Zymomonas mobilis subsp. mobilis (strain ATCC 31821 / ZM4 / CP4), this protein is Small ribosomal subunit protein uS3.